A 196-amino-acid chain; its full sequence is Holliday junction branch migration complex subunit RuvA (196 aa).

Residues 1–63 form a domain I region; it reads MYDYIKGKLS…DDAHLLFGFH (63 aa). Residues 64–142 form a domain II region; it reads TENEKEIFLN…EASGESATSR (79 aa). The interval 143–148 is flexible linker; sequence KVSSEQ. The interval 148 to 196 is domain III; the sequence is QNSNLEEAMEALLALGYKATELKKVKAFFEGTNETVEQYIKSSLKMLMK.

The protein belongs to the RuvA family. Homotetramer. Forms an RuvA(8)-RuvB(12)-Holliday junction (HJ) complex. HJ DNA is sandwiched between 2 RuvA tetramers; dsDNA enters through RuvA and exits via RuvB. An RuvB hexamer assembles on each DNA strand where it exits the tetramer. Each RuvB hexamer is contacted by two RuvA subunits (via domain III) on 2 adjacent RuvB subunits; this complex drives branch migration. In the full resolvosome a probable DNA-RuvA(4)-RuvB(12)-RuvC(2) complex forms which resolves the HJ.

Its subcellular location is the cytoplasm. In terms of biological role, the RuvA-RuvB-RuvC complex processes Holliday junction (HJ) DNA during genetic recombination and DNA repair, while the RuvA-RuvB complex plays an important role in the rescue of blocked DNA replication forks via replication fork reversal (RFR). RuvA specifically binds to HJ cruciform DNA, conferring on it an open structure. The RuvB hexamer acts as an ATP-dependent pump, pulling dsDNA into and through the RuvAB complex. HJ branch migration allows RuvC to scan DNA until it finds its consensus sequence, where it cleaves and resolves the cruciform DNA. The protein is Holliday junction branch migration complex subunit RuvA of Streptococcus agalactiae serotype III (strain NEM316).